The following is a 385-amino-acid chain: uncharacterized protein (385 aa).

It belongs to the peptidase M20 family.

This is an uncharacterized protein from Staphylococcus saprophyticus subsp. saprophyticus (strain ATCC 15305 / DSM 20229 / NCIMB 8711 / NCTC 7292 / S-41).